The primary structure comprises 912 residues: Ubiquitin carboxyl-terminal hydrolase 33 (912 aa).

A UBP-type zinc finger spans residues 6-109; the sequence is SHCPHLDSVG…PSLPHVKPLH (104 aa). 12 residues coordinate Zn(2+): Cys8, His10, Cys30, Cys33, Cys43, Cys48, Cys53, His60, His64, His70, Cys83, and Cys86. The USP domain occupies 154–685; that stretch reads TGLKNIGNTC…EAYVLFYRKS (532 aa). Cys163 acts as the Nucleophile in catalysis. A disordered region spans residues 274–334; that stretch reads ETMEEDKSQS…NSEMSKDWQK (61 aa). The span at 284–296 shows a compositional bias: polar residues; it reads DVDFQSCESCSSS. Phosphoserine occurs at positions 346 and 408. Residues 403–433 are disordered; sequence PRLSASPPKSGNLWPGLPPTHKKVQSALSPK. Over residues 422-433 the composition is skewed to basic residues; the sequence is THKKVQSALSPK. His643 acts as the Proton acceptor in catalysis. 2 DUSP domains span residues 687 to 780 and 788 to 891; these read EEAQ…LYIC and EKIE…RPPV.

Belongs to the peptidase C19 family. USP20/USP33 subfamily. As to quaternary structure, interacts with VHL, leading to its ubiquitination and subsequent degradation. Interacts with ARRB1 and ARRB2. Interacts with ADRB2. Interacts with DIO2. Interacts with ROBO1. Interacts with SELENBP1; in a selenium-dependent manner. Interacts with CCP110. Ubiquitinated via a VHL-dependent pathway for proteasomal degradation.

It localises to the cytoplasm. The protein localises to the perinuclear region. It is found in the cytoskeleton. Its subcellular location is the microtubule organizing center. The protein resides in the centrosome. The catalysed reaction is Thiol-dependent hydrolysis of ester, thioester, amide, peptide and isopeptide bonds formed by the C-terminal Gly of ubiquitin (a 76-residue protein attached to proteins as an intracellular targeting signal).. Functionally, deubiquitinating enzyme involved in various processes such as centrosome duplication, cellular migration and beta-2 adrenergic receptor/ADRB2 recycling. Involved in regulation of centrosome duplication by mediating deubiquitination of CCP110 in S and G2/M phase, leading to stabilize CCP110 during the period which centrioles duplicate and elongate. Involved in cell migration via its interaction with intracellular domain of ROBO1, leading to regulate the Slit signaling. Plays a role in commissural axon guidance cross the ventral midline of the neural tube in a Slit-dependent manner, possibly by mediating the deubiquitination of ROBO1. Acts as a regulator of G-protein coupled receptor (GPCR) signaling by mediating the deubiquitination of beta-arrestins (ARRB1 and ARRB2) and beta-2 adrenergic receptor (ADRB2). Plays a central role in ADRB2 recycling and resensitization after prolonged agonist stimulation by constitutively binding ADRB2, mediating deubiquitination of ADRB2 and inhibiting lysosomal trafficking of ADRB2. Upon dissociation, it is probably transferred to the translocated beta-arrestins, leading to beta-arrestins deubiquitination and disengagement from ADRB2. This suggests the existence of a dynamic exchange between the ADRB2 and beta-arrestins. Deubiquitinates DIO2, thereby regulating thyroid hormone regulation. Mediates deubiquitination of both 'Lys-48'- and 'Lys-63'-linked polyubiquitin chains. This chain is Ubiquitin carboxyl-terminal hydrolase 33 (USP33), found in Bos taurus (Bovine).